A 257-amino-acid polypeptide reads, in one-letter code: UPF0246 protein YaaA (257 aa).

Belongs to the UPF0246 family.

This Salmonella agona (strain SL483) protein is UPF0246 protein YaaA.